The following is a 357-amino-acid chain: Dynein axonemal assembly factor 10 (357 aa).

WD repeat units lie at residues 63–105, 115–154, 162–205, 207–249, 257–297, and 319–357; these read EKAK…MPVY, NAID…DPVA, ENKR…LRWE, NIKN…PTKG, AHKS…QRSK, and LSTQ…LNKI.

In terms of assembly, component of the PAQosome complex which is responsible for the biogenesis of several protein complexes and which consists of R2TP complex members RUVBL1, RUVBL2, RPAP3 and PIH1D1, URI complex members PFDN2, PFDN6, PDRG1, UXT and URI1 as well as ASDURF, POLR2E and DNAAF10/WDR92. Interacts with PIH1D1; the interaction associates DNAAF10 with the R2TP complex. Interacts with several dynein axonemal assembly factors. As to expression, widely expressed with the highest expression in testis.

It localises to the dynein axonemal particle. In terms of biological role, key assembly factor specifically required for the stability of axonemal dynein heavy chains in cytoplasm. In Homo sapiens (Human), this protein is Dynein axonemal assembly factor 10.